The following is a 380-amino-acid chain: Alpha-N-acetylneuraminate alpha-2,8-sialyltransferase ST8SIA3 (380 aa).

Residues 1-9 (MRNCKMARV) are Cytoplasmic-facing. Residues 10–33 (ASVLGLVMLSVALLNLSLISYVSL) traverse the membrane as a helical; Signal-anchor for type II membrane protein segment. The Lumenal portion of the chain corresponds to 34-380 (KKENIFATPK…LTKLTLSHCA (347 aa)). 2 N-linked (GlcNAc...) asparagine glycosylation sites follow: Asn-93 and Asn-113. Disulfide bonds link Cys-162–Cys-313 and Cys-176–Cys-379. The CMP-N-acetyl-beta-neuraminate site is built by Asn-167 and Asn-190. A glycan (N-linked (GlcNAc...) asparagine) is linked at Asn-206. Ser-300, Thr-301, Gly-302, Trp-322, Tyr-336, and His-337 together coordinate CMP-N-acetyl-beta-neuraminate. His-354 functions as the Proton donor/acceptor in the catalytic mechanism.

Belongs to the glycosyltransferase 29 family. In terms of assembly, homodimer. In terms of processing, autopolysialylated.

The protein resides in the golgi apparatus membrane. The catalysed reaction is [N-acetyl-alpha-D-neuraminosyl-(2-&gt;8)](n) + CMP-N-acetyl-beta-neuraminate = [N-acetyl-alpha-D-neuraminosyl-(2-&gt;8)](n+1) + CMP + H(+). The enzyme catalyses alpha-Neu5Ac-(2-&gt;3)-beta-D-Gal-(1-&gt;4)-6S-D-GlcNAc + CMP-N-acetyl-beta-neuraminate = alpha-Neu5Ac-(2-&gt;8)-alpha-Neu5Ac-(2-&gt;3)-beta-D-Gal-(1-&gt;4)-6S-D-GlcNAc + CMP + H(+). It carries out the reaction a ganglioside GM3 (d18:1(4E)) + CMP-N-acetyl-beta-neuraminate = a ganglioside GD3 (d18:1(4E)) + CMP + H(+). It catalyses the reaction a ganglioside GM3 + CMP-N-acetyl-beta-neuraminate = a ganglioside GD3 + CMP + H(+). The catalysed reaction is an N-acetyl-alpha-neuraminyl-(2-&gt;3)-beta-D-galactosyl derivative + CMP-N-acetyl-beta-neuraminate = an N-acetyl-alpha-neuraminyl-(2-&gt;8)-N-acetyl-alpha-neuraminyl-(2-&gt;3)-beta-D-galactosyl derivative + CMP + H(+). The enzyme catalyses an N-acetyl-alpha-neuraminyl-(2-&gt;3)-beta-D-galactosyl-(1-&gt;4)-N-acetyl-beta-D-glucosaminyl derivative + CMP-N-acetyl-beta-neuraminate = an alpha-Neu5Ac-(2-&gt;8)-alpha-Neu5Ac-(2-&gt;3)-beta-D-Gal-(1-&gt;4)-beta-D-GlcNAc derivative + CMP + H(+). It participates in protein modification; protein glycosylation. In terms of biological role, catalyzes the transfer of sialic acid from a CMP-linked sialic acid donor onto a terminal alpha-2,3-, alpha-2,6-, or alpha-2,8-linked sialic acid of an acceptor, such as N-linked oligosaccharides of glycoproteins and glycolipids through alpha-2,8-linkages. Forms oligosialic and polysialic acid on various sialylated N-acetyllactosamine oligosaccharides of glycoproteins, including FETUB N-glycans, a2-HS-glycoprotein (AHSG) and alpha 2,3-sialylated glycosphingolipids, such as alpha 2,3-sialylparagloboside and ganglioside GM3 and to a lesser extent NCAM1 N-glycans. However, it is much more specific to N-linked oligosaccharides of glycoproteins than glycosphingolipids. 2,3-sialylparagloboside serves as the best acceptor substrate among the glycolipids. alpha-Neu5Ac-(2-&gt;8)-alpha-Neu5Ac-(2-&gt;3)-beta-D-Gal-(1-&gt;4)-6S-D-GlcNAc and monosialyl and disialyl N-acetyllactosamines are the best acceptor substrates among glycoproteins. May plays critical role in the striatum by mediating the formation of disialylated and trisialylated terminal glycotopes on N- and O-glycans of specific striatal proteins, regulating their distribution in lipid rafts, affecting their interaction with other binding partners, and subsequently modulating striatal functions. This chain is Alpha-N-acetylneuraminate alpha-2,8-sialyltransferase ST8SIA3, found in Pan troglodytes (Chimpanzee).